The primary structure comprises 201 residues: Holliday junction resolvase RecU (201 aa).

Residues Thr-85, Asp-87, Asp-100, and Gln-119 each coordinate Mg(2+).

It belongs to the RecU family. Mg(2+) serves as cofactor.

It is found in the cytoplasm. The enzyme catalyses Endonucleolytic cleavage at a junction such as a reciprocal single-stranded crossover between two homologous DNA duplexes (Holliday junction).. Functionally, endonuclease that resolves Holliday junction intermediates in genetic recombination. Cleaves mobile four-strand junctions by introducing symmetrical nicks in paired strands. Promotes annealing of linear ssDNA with homologous dsDNA. Required for DNA repair, homologous recombination and chromosome segregation. The chain is Holliday junction resolvase RecU from Pediococcus pentosaceus (strain ATCC 25745 / CCUG 21536 / LMG 10740 / 183-1w).